The primary structure comprises 301 residues: ATP synthase gamma chain (301 aa).

Belongs to the ATPase gamma chain family. F-type ATPases have 2 components, CF(1) - the catalytic core - and CF(0) - the membrane proton channel. CF(1) has five subunits: alpha(3), beta(3), gamma(1), delta(1), epsilon(1). CF(0) has three main subunits: a, b and c.

It localises to the cell inner membrane. Produces ATP from ADP in the presence of a proton gradient across the membrane. The gamma chain is believed to be important in regulating ATPase activity and the flow of protons through the CF(0) complex. This chain is ATP synthase gamma chain, found in Helicobacter pylori (strain HPAG1).